We begin with the raw amino-acid sequence, 269 residues long: Ribosomal RNA small subunit methyltransferase J (269 aa).

S-adenosyl-L-methionine contacts are provided by residues 125–126 and aspartate 179; that span reads ER.

It belongs to the methyltransferase superfamily. RsmJ family.

It is found in the cytoplasm. The catalysed reaction is guanosine(1516) in 16S rRNA + S-adenosyl-L-methionine = N(2)-methylguanosine(1516) in 16S rRNA + S-adenosyl-L-homocysteine + H(+). Functionally, specifically methylates the guanosine in position 1516 of 16S rRNA. In Pseudomonas syringae pv. syringae (strain B728a), this protein is Ribosomal RNA small subunit methyltransferase J.